A 202-amino-acid chain; its full sequence is Pycsar effector protein PtPycTM (202 aa).

Transmembrane regions (helical) follow at residues 60–80 (GVVL…AADI), 85–105 (LVIL…AVLA), and 181–201 (ILVG…VALG).

It localises to the cell membrane. Its function is as follows. Pycsar (pyrimidine cyclase system for antiphage resistance) provides immunity against bacteriophage. The pyrimidine cyclase (PycC) synthesizes cyclic nucleotides in response to infection; these serve as specific second messenger signals. The signals activate the adjacent effector, leading to bacterial cell death and abortive phage infection. A clade D Pycsar system. In terms of biological role, the effector gene of a two-gene Pycsar system. Expression of this and adjacent uridylate cyclase PtPycC (AC A0A4V2JTK3) probably confers resistance to bacteriophage. The genes are probably only expressed in response to bacteriophage infection. Probably only responds to cUMP (produced by its cognate NTP cyclase), acts by impairing membrane integrity. The chain is Pycsar effector protein PtPycTM from Propioniciclava tarda.